Here is a 205-residue protein sequence, read N- to C-terminus: 3-demethoxyubiquinol 3-hydroxylase (205 aa).

Residues E54, E84, H87, E136, E168, and H171 each coordinate Fe cation.

It belongs to the COQ7 family. Fe cation serves as cofactor.

The protein resides in the cell membrane. It carries out the reaction a 5-methoxy-2-methyl-3-(all-trans-polyprenyl)benzene-1,4-diol + AH2 + O2 = a 3-demethylubiquinol + A + H2O. It participates in cofactor biosynthesis; ubiquinone biosynthesis. Functionally, catalyzes the hydroxylation of 2-nonaprenyl-3-methyl-6-methoxy-1,4-benzoquinol during ubiquinone biosynthesis. The chain is 3-demethoxyubiquinol 3-hydroxylase from Delftia acidovorans (strain DSM 14801 / SPH-1).